We begin with the raw amino-acid sequence, 605 residues long: F-box/WD repeat-containing protein 1A (605 aa).

Positions 128 to 177 (ASYEKEKELCVKYFEQWSESDQVEFVEHLISQMCHYQHGHINSYLKPMLQ) are homodimerization domain D. An F-box domain is found at 182-228 (TALPARGLDHIAENILSYLDAKSLCAAELVCKEWYRVTSDGMLWKKL). The required for down-regulation of SNAI1 stretch occupies residues 190 to 228 (DHIAENILSYLDAKSLCAAELVCKEWYRVTSDGMLWKKL). WD repeat units lie at residues 301 to 338 (ETSKGVYCLQYDDQKIVSGLRDNTIKIWDKSTLECKRI), 341 to 378 (GHTGSVLCLQYDERVIITGSSDSTVRVWDVNAGEMLNT), 381 to 418 (HHCEAVLHLRFNNGMMVTCSKDRSIAVWDMASPTDITL), 424 to 461 (GHRAAVNVVDFDDKYIVSASGDRTIKVWNTSTCEFVRT), 464 to 503 (GHKRGIACLQYRDRLVVSGSSDNTIRLWDIECGACLRVLE), 505 to 541 (HEELVRCIRFDNKRIVSGAYDGKIKVWDLMAALDPRA), and 553 to 590 (EHSGRVFRLQFDEFQIVSSSHDDTILIWDFLNDPAAHA).

In terms of assembly, homodimer. Self-associates. Component of the SCF(BTRC) complex, composed of SKP1, CUL1 and BTRC. Direct interaction with SKP1 with SKP1 occurs via the F-box domain. Interacts with phosphorylated ubiquitination substrates SMAD3 and SMAD4. Interacts with phosphorylated ubiquitination substrates CTNNB1, NFKBIA, NFKBIB, NFKBIE, NFKB1/nuclear factor NF-kappa-B p105 subunit, ATF4, CDC25A, DLG1, FBXO5 and SNAI1; the interaction requires the phosphorylation of the 2 serine residues in the substrate destruction motif D-S-G-X(2,3,4)-S. Binds UBQLN1. Interacts with CDC34 and UBE2R2. Interacts with FBXW11. Interacts with CUL4A and DDB1. Part of a SCF(BTRC)-like complex lacking CUL1, which is associated with phosphorylated NKBIA and RELA; RELA interacts directly with NFKBIA. Interacts with the phosphorylated form of GLI3. Interacts with CLU. Interacts with PER1 (phosphorylated), PER2 (phosphorylated) and PER3. Interacts with phosphorylated ubiquitination substrate CEP68. Interacts with ZC3H12A; this interaction occurs when ZC3H12A is phosphorylated in a IKBKB/IKKB-dependent manner. Interacts with HSF1; this interaction occurs during mitosis and induces HSF1 ubiquitin-dependent degradation, a process inhibited by CDC20. Interacts with NFE2L1. Interacts with INAVA. Interacts with IL10RA; this interaction leads to IL10RA ubiquitination and subsequent degradation. Interacts with REST. Interacts with KLF4; this interaction leads to KLF4 ubiquitination and subsequent degradation. Interacts with UBR2, as part of a SCF(BTRC) complex; the interaction mediates 'Lys-48'-linked ubiquitination of UBR2 and is regulated by DUSP22 in the T-cell receptor signaling pathway. Ubiquitinated via 'Lys-11'-linked polyubiquitin by some cullin-5-RING E3 ubiquitin-protein ligase complex (ECS complex), leading to its degradation. Deubiquitinated by OTUD5, promoting its stability. In terms of tissue distribution, expressed in heart, brain, liver, skeletal muscle and, most strongly, in testis.

The protein localises to the cytoplasm. It is found in the nucleus. The protein operates within protein modification; protein ubiquitination. In terms of biological role, substrate recognition component of a SCF (SKP1-CUL1-F-box protein) E3 ubiquitin-protein ligase complex which mediates the ubiquitination and subsequent proteasomal degradation of target proteins. Recognizes and binds to phosphorylated target proteins. SCF(BTRC) mediates the ubiquitination of phosphorylated NFKB, ATF4, CDC25A, DLG1, FBXO5, PER1, SMAD3, SMAD4, SNAI1 and probably NFKB2. SCF(BTRC) mediates the ubiquitination of CTNNB1 and participates in Wnt signaling. SCF(BTRC) mediates the ubiquitination of NFKBIA, NFKBIB and NFKBIE; the degradation frees the associated NFKB1 to translocate into the nucleus and to activate transcription. Ubiquitination of NFKBIA occurs at 'Lys-21' and 'Lys-22'. The SCF(FBXW11) complex also regulates NF-kappa-B by mediating ubiquitination of phosphorylated NFKB1: specifically ubiquitinates the p105 form of NFKB1, leading to its degradation. SCF(BTRC) mediates the ubiquitination of CEP68; this is required for centriole separation during mitosis. SCF(BTRC) mediates the ubiquitination and subsequent degradation of nuclear NFE2L1. Has an essential role in the control of the clock-dependent transcription via degradation of phosphorylated PER1 and PER2. May be involved in ubiquitination and subsequent proteasomal degradation through a DBB1-CUL4 E3 ubiquitin-protein ligase. Required for activation of NFKB-mediated transcription by IL1B, MAP3K14, MAP3K1, IKBKB and TNF. Required for proteolytic processing of GLI3. Mediates ubiquitination of REST, thereby leading to its proteasomal degradation. SCF(BTRC) mediates the ubiquitination and subsequent proteasomal degradation of KLF4; thereby negatively regulating cell pluripotency maintenance and embryogenesis. SCF(BTRC) acts as a regulator of mTORC1 signaling pathway by catalyzing ubiquitination and subsequent proteasomal degradation of phosphorylated DEPTOR, TFE3 and MITF. SCF(BTRC) directs 'Lys-48'-linked ubiquitination of UBR2 in the T-cell receptor signaling pathway. In Mus musculus (Mouse), this protein is F-box/WD repeat-containing protein 1A.